The following is a 98-amino-acid chain: Lactococcin-A immunity protein (98 aa).

Functionally, imparts immunity to lactococcin-A to naturally sensitive host strains. The sequence is that of Lactococcin-A immunity protein (lciA) from Lactococcus lactis subsp. cremoris (Streptococcus cremoris).